A 309-amino-acid polypeptide reads, in one-letter code: Porphobilinogen deaminase (309 aa).

S-(dipyrrolylmethanemethyl)cysteine is present on Cys-242.

This sequence belongs to the HMBS family. As to quaternary structure, monomer. Dipyrromethane is required as a cofactor.

The catalysed reaction is 4 porphobilinogen + H2O = hydroxymethylbilane + 4 NH4(+). It functions in the pathway porphyrin-containing compound metabolism; protoporphyrin-IX biosynthesis; coproporphyrinogen-III from 5-aminolevulinate: step 2/4. In terms of biological role, tetrapolymerization of the monopyrrole PBG into the hydroxymethylbilane pre-uroporphyrinogen in several discrete steps. In Legionella pneumophila (strain Paris), this protein is Porphobilinogen deaminase.